Reading from the N-terminus, the 221-residue chain is Thiopurine S-methyltransferase (221 aa).

4 residues coordinate S-adenosyl-L-methionine: Trp12, Leu47, Glu68, and Arg125.

The protein belongs to the class I-like SAM-binding methyltransferase superfamily. TPMT family.

The protein localises to the cytoplasm. It catalyses the reaction S-adenosyl-L-methionine + a thiopurine = S-adenosyl-L-homocysteine + a thiopurine S-methylether.. The chain is Thiopurine S-methyltransferase from Legionella pneumophila (strain Corby).